The primary structure comprises 212 residues: uncharacterized protein (212 aa).

A helical membrane pass occupies residues 5 to 25 (IFIILIAVLLIGVNIKKIAAA).

It is found in the membrane. This is an uncharacterized protein from Borreliella burgdorferi (strain ATCC 35210 / DSM 4680 / CIP 102532 / B31) (Borrelia burgdorferi).